The sequence spans 191 residues: Putative glutathione-dependent formaldehyde-activating enzyme (191 aa).

In terms of domain architecture, CENP-V/GFA spans 20–166 (FPGGNLYCKC…FHSLGLETYD (147 aa)). Residues C27, C29, C48, C50, C53, C95, and C98 each contribute to the Zn(2+) site.

It belongs to the Gfa family. It depends on Zn(2+) as a cofactor.

The enzyme catalyses S-(hydroxymethyl)glutathione = glutathione + formaldehyde. It participates in one-carbon metabolism; formaldehyde degradation; formate from formaldehyde (glutathione route): step 1/3. Catalyzes the condensation of formaldehyde and glutathione to S-hydroxymethylglutathione. The protein is Putative glutathione-dependent formaldehyde-activating enzyme of Aspergillus niger (strain ATCC MYA-4892 / CBS 513.88 / FGSC A1513).